The chain runs to 541 residues: Zinc finger protein 503 (541 aa).

Polar residues predominate over residues 1-18 (MSNSPLGSGSRISHFTTE). Disordered stretches follow at residues 1-49 (MSNS…QAGR) and 97-255 (TCSQ…SSSV). Residues 137-157 (AEDKSSFKPYSKHPDKKDQSA) show a composition bias toward basic and acidic residues. Residues 236–255 (SLSAAPSPTPASSSSSSSSV) show a composition bias toward low complexity. The segment at 411–439 (HVCNWVSATGPCDKRFSSSEELLGHLRTH) adopts a C2H2-type zinc-finger fold. A disordered region spans residues 474–511 (GASPGPLTLRSPHHHPLGLSSSRYHPYSKSPLPSGGAP).

The protein belongs to the Elbow/Noc family.

It localises to the nucleus. May function as a transcriptional repressor. The sequence is that of Zinc finger protein 503 (znf503) from Xenopus tropicalis (Western clawed frog).